The following is a 66-amino-acid chain: UPF0434 protein RPC_0266 (66 aa).

It belongs to the UPF0434 family.

In Rhodopseudomonas palustris (strain BisB18), this protein is UPF0434 protein RPC_0266.